Here is a 576-residue protein sequence, read N- to C-terminus: TOX high mobility group box family member 3 (576 aa).

Disordered stretches follow at residues 189–258 (NLGG…PQKP), 422–443 (TMVGSAPSTQVSPSVQTQQHQM), and 519–563 (LQHM…QIQS). Positions 204–215 (ASKSATPSPSSS) are enriched in low complexity. Residues 223–239 (EANRAIGEKRAAPDSGK) are compositionally biased toward basic and acidic residues. Over residues 240–250 (KPKTPKKKKKK) the composition is skewed to basic residues. The segment at residues 255–323 (PQKPVSAYAL…EYLKALAAYR (69 aa)) is a DNA-binding region (HMG box). A compositionally biased stretch (low complexity) spans 428–443 (PSTQVSPSVQTQQHQM). Residues 528–542 (PSPRQHSPVASQITS) are compositionally biased toward polar residues. A compositionally biased stretch (low complexity) spans 549-563 (SPQPASQQHQSQIQS).

In terms of assembly, homodimer. Interacts with CREB1; the interaction is not depolarization dependent. Interacts with CREBBP (via C-terminus). Interacts (via HGM box) with CITED1 (via C-terminus); the interaction increases estrogen-response element (ERE)-dependent transcription and protection against cell death. Interacts with CREB1 (phosphorylated form). Expressed mainly in epithelial cells. Expressed in the central nervous system (CNS), in the ileum and within the brain in the frontal and occipital lobe.

It localises to the nucleus. In terms of biological role, transcriptional coactivator of the p300/CBP-mediated transcription complex. Activates transactivation through cAMP response element (CRE) sites. Protects against cell death by inducing antiapoptotic and repressing pro-apoptotic transcripts. Stimulates transcription from the estrogen-responsive or BCL-2 promoters. Required for depolarization-induced transcription activation of the C-FOS promoter in neurons. Associates with chromatin to the estrogen-responsive C3 promoter region. The sequence is that of TOX high mobility group box family member 3 (TOX3) from Homo sapiens (Human).